The primary structure comprises 486 residues: Ribosomal RNA small subunit methyltransferase F (486 aa).

Residues 124–130 (ASAPGSK), glutamate 148, aspartate 175, and aspartate 193 each bind S-adenosyl-L-methionine. The Nucleophile role is filled by cysteine 246.

The protein belongs to the class I-like SAM-binding methyltransferase superfamily. RsmB/NOP family.

The protein resides in the cytoplasm. The enzyme catalyses cytidine(1407) in 16S rRNA + S-adenosyl-L-methionine = 5-methylcytidine(1407) in 16S rRNA + S-adenosyl-L-homocysteine + H(+). Its function is as follows. Specifically methylates the cytosine at position 1407 (m5C1407) of 16S rRNA. The protein is Ribosomal RNA small subunit methyltransferase F of Shewanella baltica (strain OS155 / ATCC BAA-1091).